The following is a 224-amino-acid chain: Probable molybdenum cofactor guanylyltransferase (224 aa).

GTP-binding positions include 20–22 (LAG), lysine 33, aspartate 88, and aspartate 117. Aspartate 117 contacts Mg(2+).

It belongs to the MobA family. Mg(2+) serves as cofactor.

It localises to the cytoplasm. It carries out the reaction Mo-molybdopterin + GTP + H(+) = Mo-molybdopterin guanine dinucleotide + diphosphate. Functionally, transfers a GMP moiety from GTP to Mo-molybdopterin (Mo-MPT) cofactor (Moco or molybdenum cofactor) to form Mo-molybdopterin guanine dinucleotide (Mo-MGD) cofactor. This Methanosarcina mazei (strain ATCC BAA-159 / DSM 3647 / Goe1 / Go1 / JCM 11833 / OCM 88) (Methanosarcina frisia) protein is Probable molybdenum cofactor guanylyltransferase.